The primary structure comprises 90 residues: uncharacterized protein (90 aa).

Residues 15 to 34 traverse the membrane as a helical segment; that stretch reads HVLAISTFIATAAVASYFTT. Residues 34–65 form a disordered region; it reads TKPKTKNEGKNSSALSQQKSGESSNSDAMGKD. Over residues 43-60 the composition is skewed to polar residues; the sequence is KNSSALSQQKSGESSNSD. The N-linked (GlcNAc...) asparagine glycan is linked to Asn-44.

It localises to the mitochondrion membrane. This is an uncharacterized protein from Saccharomyces cerevisiae (strain ATCC 204508 / S288c) (Baker's yeast).